The chain runs to 358 residues: 2-oxoisovalerate dehydrogenase subunit beta 2, mitochondrial (358 aa).

The transit peptide at 1–16 (MAAALVRRFCRGSSFP) directs the protein to the mitochondrion. Y119 serves as a coordination point for thiamine diphosphate. K(+)-binding residues include G145, L147, T148, D198, and N200.

In terms of assembly, heterotetramer of alpha and beta chains. Thiamine diphosphate serves as cofactor. In terms of tissue distribution, expressed in the non-photosynthetic organs such as siliques, flowers and roots.

The protein localises to the mitochondrion matrix. It carries out the reaction N(6)-[(R)-lipoyl]-L-lysyl-[protein] + 3-methyl-2-oxobutanoate + H(+) = N(6)-[(R)-S(8)-2-methylpropanoyldihydrolipoyl]-L-lysyl-[protein] + CO2. In terms of biological role, the branched-chain alpha-keto dehydrogenase complex catalyzes the overall conversion of alpha-keto acids to acyl-CoA and CO(2). It contains multiple copies of three enzymatic components: branched-chain alpha-keto acid decarboxylase (E1), lipoamide acyltransferase (E2) and lipoamide dehydrogenase (E3). Required during sugar starvation and acts under the control of a sugar-sensing mechanism involving Ser/Thr kinases and phosphatases. The polypeptide is 2-oxoisovalerate dehydrogenase subunit beta 2, mitochondrial (DIN4) (Arabidopsis thaliana (Mouse-ear cress)).